The primary structure comprises 190 residues: Translation initiation factor IF-3 (190 aa).

The protein belongs to the IF-3 family. In terms of assembly, monomer.

The protein localises to the cytoplasm. Functionally, IF-3 binds to the 30S ribosomal subunit and shifts the equilibrium between 70S ribosomes and their 50S and 30S subunits in favor of the free subunits, thus enhancing the availability of 30S subunits on which protein synthesis initiation begins. This is Translation initiation factor IF-3 from Prochlorococcus marinus (strain MIT 9312).